A 142-amino-acid chain; its full sequence is Small heat shock protein IbpB (142 aa).

The sHSP domain maps to 26-137 (AGEGQSFPPY…AAQRIAISER (112 aa)).

The protein belongs to the small heat shock protein (HSP20) family. In terms of assembly, homodimer. Forms homomultimers of about 100-150 subunits at optimal growth temperatures. Conformation changes to oligomers at high temperatures or high ionic concentrations. The decrease in size of the multimers is accompanied by an increase in chaperone activity.

The protein localises to the cytoplasm. In terms of biological role, associates with aggregated proteins, together with IbpA, to stabilize and protect them from irreversible denaturation and extensive proteolysis during heat shock and oxidative stress. Aggregated proteins bound to the IbpAB complex are more efficiently refolded and reactivated by the ATP-dependent chaperone systems ClpB and DnaK/DnaJ/GrpE. Its activity is ATP-independent. This Shigella boydii serotype 18 (strain CDC 3083-94 / BS512) protein is Small heat shock protein IbpB.